Consider the following 132-residue polypeptide: Large ribosomal subunit protein bL12 (132 aa).

The protein belongs to the bacterial ribosomal protein bL12 family. As to quaternary structure, homodimer. Part of the ribosomal stalk of the 50S ribosomal subunit. Forms a multimeric L10(L12)X complex, where L10 forms an elongated spine to which 2 to 4 L12 dimers bind in a sequential fashion. Binds GTP-bound translation factors.

Functionally, forms part of the ribosomal stalk which helps the ribosome interact with GTP-bound translation factors. Is thus essential for accurate translation. This Chloroflexus aurantiacus (strain ATCC 29366 / DSM 635 / J-10-fl) protein is Large ribosomal subunit protein bL12.